Here is a 256-residue protein sequence, read N- to C-terminus: 1-(5-phosphoribosyl)-5-[(5-phosphoribosylamino)methylideneamino] imidazole-4-carboxamide isomerase (256 aa).

The active-site Proton acceptor is D8. D129 (proton donor) is an active-site residue.

This sequence belongs to the HisA/HisF family.

The protein localises to the cytoplasm. It catalyses the reaction 1-(5-phospho-beta-D-ribosyl)-5-[(5-phospho-beta-D-ribosylamino)methylideneamino]imidazole-4-carboxamide = 5-[(5-phospho-1-deoxy-D-ribulos-1-ylimino)methylamino]-1-(5-phospho-beta-D-ribosyl)imidazole-4-carboxamide. It participates in amino-acid biosynthesis; L-histidine biosynthesis; L-histidine from 5-phospho-alpha-D-ribose 1-diphosphate: step 4/9. This Syntrophobacter fumaroxidans (strain DSM 10017 / MPOB) protein is 1-(5-phosphoribosyl)-5-[(5-phosphoribosylamino)methylideneamino] imidazole-4-carboxamide isomerase.